We begin with the raw amino-acid sequence, 418 residues long: Glutamyl-tRNA reductase (418 aa).

Substrate is bound by residues 49-52, Ser108, 113-115, and Gln119; these read TCNR and EPQ. Cys50 serves as the catalytic Nucleophile. 188–193 contributes to the NADP(+) binding site; it reads GAGETI.

Belongs to the glutamyl-tRNA reductase family. Homodimer.

The enzyme catalyses (S)-4-amino-5-oxopentanoate + tRNA(Glu) + NADP(+) = L-glutamyl-tRNA(Glu) + NADPH + H(+). The protein operates within porphyrin-containing compound metabolism; protoporphyrin-IX biosynthesis; 5-aminolevulinate from L-glutamyl-tRNA(Glu): step 1/2. Functionally, catalyzes the NADPH-dependent reduction of glutamyl-tRNA(Glu) to glutamate 1-semialdehyde (GSA). The protein is Glutamyl-tRNA reductase of Aliivibrio fischeri (strain MJ11) (Vibrio fischeri).